Reading from the N-terminus, the 289-residue chain is ATP synthase subunit a (289 aa).

A run of 6 helical transmembrane segments spans residues 43-63 (AFHL…LLIF), 103-123 (VIAP…AVDL), 160-180 (FCVF…GGFI), 193-213 (IFVQ…TLIA), 232-252 (VFIL…GLGV), and 259-279 (AVFH…LTIV).

This sequence belongs to the ATPase A chain family. F-type ATPases have 2 components, CF(1) - the catalytic core - and CF(0) - the membrane proton channel. CF(1) has five subunits: alpha(3), beta(3), gamma(1), delta(1), epsilon(1). CF(0) has three main subunits: a(1), b(2) and c(9-12). The alpha and beta chains form an alternating ring which encloses part of the gamma chain. CF(1) is attached to CF(0) by a central stalk formed by the gamma and epsilon chains, while a peripheral stalk is formed by the delta and b chains.

It localises to the cell inner membrane. Its function is as follows. Key component of the proton channel; it plays a direct role in the translocation of protons across the membrane. This Pseudomonas putida (strain ATCC 700007 / DSM 6899 / JCM 31910 / BCRC 17059 / LMG 24140 / F1) protein is ATP synthase subunit a.